Here is a 228-residue protein sequence, read N- to C-terminus: Orotate phosphoribosyltransferase (228 aa).

5-phospho-alpha-D-ribose 1-diphosphate is bound at residue Lys26. 34 to 35 contributes to the orotate binding site; the sequence is FF. 5-phospho-alpha-D-ribose 1-diphosphate-binding positions include 72–73, Arg98, Lys99, Lys102, His104, and 123–131; these read YK and DDVISAGTS. Residues Ser127 and Arg155 each contribute to the orotate site.

Belongs to the purine/pyrimidine phosphoribosyltransferase family. PyrE subfamily. As to quaternary structure, homodimer. It depends on Mg(2+) as a cofactor.

The catalysed reaction is orotidine 5'-phosphate + diphosphate = orotate + 5-phospho-alpha-D-ribose 1-diphosphate. The protein operates within pyrimidine metabolism; UMP biosynthesis via de novo pathway; UMP from orotate: step 1/2. In terms of biological role, catalyzes the transfer of a ribosyl phosphate group from 5-phosphoribose 1-diphosphate to orotate, leading to the formation of orotidine monophosphate (OMP). This Nitrosospira multiformis (strain ATCC 25196 / NCIMB 11849 / C 71) protein is Orotate phosphoribosyltransferase.